The primary structure comprises 1028 residues: Sporulation-specific protein 3 (1028 aa).

The protein localises to the prospore membrane. Has a role in spore morphogenesis. Involved in the assembly of the forespore membrane. In Schizosaccharomyces pombe (strain 972 / ATCC 24843) (Fission yeast), this protein is Sporulation-specific protein 3 (spo3).